Reading from the N-terminus, the 450-residue chain is Sorting nexin-4 (450 aa).

M1 carries the N-acetylmethionine modification. The disordered stretch occupies residues 1-53 (MEQAAPDPERLWQPAPLEPLSHPDAGLESMVGEETKGARDEGPGDGTMTENNF). The span at 33–42 (EETKGARDEG) shows a compositional bias: basic and acidic residues. The PX domain occupies 61-187 (SVSEAEKRTG…YLFLTQEGNW (127 aa)). A 1,2-diacyl-sn-glycero-3-phospho-(1D-myo-inositol-3-phosphate)-binding residues include R106, S108, K132, and R154.

The protein belongs to the sorting nexin family. Heterodimer; heterodimerizes with SNX7 or SNX30. Interacts with WWC1/KIBRA. Identified in a complex with WWC1/KIBRA and dynein components DYNLL1 and DYNC1I2. Interacts with BIN1.

The protein resides in the early endosome. It is found in the early endosome membrane. In terms of biological role, involved in the regulation of endocytosis and in several stages of intracellular trafficking. Plays a role in recycling endocytosed transferrin receptor and prevent its degradation. Involved in autophagosome assembly by regulating trafficking and recycling of phospholipid scramblase ATG9A. This chain is Sorting nexin-4, found in Bos taurus (Bovine).